Reading from the N-terminus, the 207-residue chain is Casparian strip membrane protein 1 (207 aa).

A compositionally biased stretch (polar residues) spans 1–12; that stretch reads MEGESTAVNITE. A disordered region spans residues 1 to 24; the sequence is MEGESTAVNITETPKERKGKAPLL. Topologically, residues 1–48 are cytoplasmic; that stretch reads MEGESTAVNITETPKERKGKAPLLAPPPASGGIKTIVQKAPKGGYKRG. A helical transmembrane segment spans residues 49 to 69; sequence LAVFDVVLRIAGIAAALGAVI. The Extracellular segment spans residues 70–98; that stretch reads AMGSTDQTLPFFTQFFQFKAEFDDLPVFT. Residues 99 to 119 traverse the membrane as a helical segment; sequence FFVIANAITAAYLALSIPISI. The Cytoplasmic portion of the chain corresponds to 120-138; the sequence is VCIIRPHLVGPRVLLTFLD. Residues 139–159 traverse the membrane as a helical segment; the sequence is TVMVGLTTAAAGGAASIVYLA. At 160–184 the chain is on the extracellular side; sequence HNGNSDANWPAICQQFNDFCQEVSG. Residues 185-205 traverse the membrane as a helical segment; that stretch reads AVVASFITVVVLMFLIVLSAF. Residues 206–207 are Cytoplasmic-facing; the sequence is SL.

It belongs to the Casparian strip membrane proteins (CASP) family. Homodimer and heterodimers.

The protein localises to the cell membrane. Its function is as follows. Regulates membrane-cell wall junctions and localized cell wall deposition. Required for establishment of the Casparian strip membrane domain (CSD) and the subsequent formation of Casparian strips, a cell wall modification of the root endodermis that determines an apoplastic barrier between the intraorganismal apoplasm and the extraorganismal apoplasm and prevents lateral diffusion. The chain is Casparian strip membrane protein 1 from Taraxacum kok-saghyz (Russian dandelion).